The primary structure comprises 465 residues: Pleckstrin homology domain-containing family S member 1 (465 aa).

Residues 14-129 (EVCKQDYFIK…WVSFMSSFRQ (116 aa)) form the PH domain. Positions 159-173 (PSSTSEAVGSSSPRN) are enriched in polar residues. Disordered stretches follow at residues 159 to 179 (PSST…QDKH) and 258 to 283 (ETSH…GDLH). Positions 258 to 271 (ETSHESVDSSKEEP) are enriched in basic and acidic residues.

The polypeptide is Pleckstrin homology domain-containing family S member 1 (Homo sapiens (Human)).